A 361-amino-acid chain; its full sequence is Hsc70-interacting protein (361 aa).

Positions 39–98 (GGTIPPAPASTSTDETSKGKAEEQPEEPVKSPEPESEESDLEIDNEGVIEPDNDDPQEMG) are disordered. Basic and acidic residues predominate over residues 53-71 (ETSKGKAEEQPEEPVKSPE). Acidic residues predominate over residues 72-98 (PESEESDLEIDNEGVIEPDNDDPQEMG). TPR repeat units lie at residues 112-145 (ANEK…NPCL), 147-179 (ILYA…NPDS), and 181-213 (QTYK…DYDE). The segment covering 254-270 (KAREEHERAQREEEARR) has biased composition (basic and acidic residues). Positions 254-292 (KAREEHERAQREEEARRQAGGAQFGGFPGGFPGGFPGAM) are disordered. A compositionally biased stretch (gly residues) spans 275 to 292 (AQFGGFPGGFPGGFPGAM). The 40-residue stretch at 311 to 350 (DPEVLAAMQDPEVMAAFQDVAQNPANMSKYQNNPKVMSLI) folds into the STI1 domain.

This sequence belongs to the FAM10 family. As to quaternary structure, homotetramer. Interacts with HSC70 as well as DNAJ homologs and HSP90.

It is found in the cytoplasm. One HIP oligomer binds the ATPase domains of at least two HSC70 molecules dependent on activation of the HSC70 ATPase by HSP40. Stabilizes the ADP state of HSC70 that has a high affinity for substrate protein. Through its own chaperone activity, it may contribute to the interaction of HSC70 with various target proteins. This is Hsc70-interacting protein (ST13) from Gallus gallus (Chicken).